Here is a 129-residue protein sequence, read N- to C-terminus: Putative membrane protein insertion efficiency factor (129 aa).

It belongs to the UPF0161 family.

It is found in the cell inner membrane. Could be involved in insertion of integral membrane proteins into the membrane. The sequence is that of Putative membrane protein insertion efficiency factor from Rhodopseudomonas palustris (strain ATCC BAA-98 / CGA009).